Here is a 418-residue protein sequence, read N- to C-terminus: Flavin-dependent L-tryptophan oxidase VioA (418 aa).

Residue G13 participates in Mg(2+) binding. S15 contributes to the FAD binding site. Residue G16 participates in Mg(2+) binding. Residues D38, R46, and R64 each contribute to the FAD site. 2 residues coordinate substrate: R64 and H163. L208 is an FAD binding site. A240 is a binding site for Mg(2+). Residue Y309 coordinates substrate. M398 is a binding site for FAD.

This sequence belongs to the flavin monoamine oxidase family. In terms of assembly, homodimer. FAD is required as a cofactor. Requires Mg(2+) as cofactor.

It catalyses the reaction L-tryptophan + O2 = 2-iminio-3-(indol-3-yl)propanoate + H2O2. It carries out the reaction 7-chloro-L-tryptophan + O2 = 3-(7-chloroindol-3-yl)-2-iminopropanoate + H2O2. It participates in pigment biosynthesis; violacein biosynthesis. In terms of biological role, the enzyme generates the imine form of indole 3-pyruvate (IPA) from L-tryptophan (L-Trp), with concomitant two-electron reduction of O(2) to H(2)O(2). This chain is Flavin-dependent L-tryptophan oxidase VioA (vioA), found in Chromobacterium violaceum (strain ATCC 12472 / DSM 30191 / JCM 1249 / CCUG 213 / NBRC 12614 / NCIMB 9131 / NCTC 9757 / MK).